Here is a 436-residue protein sequence, read N- to C-terminus: MALYCGDNFGVYSQPGLPPPAAAAAAAAAAPGAPPASRAPYALADYAAPPAAAANPYLWLNGPGVGVGVGVGVGGPPAAAAAAAAAYLGAPPPPPPPPGGAAGPFLQPPPAAGTFGCAQRAFAQPAPAAPASPAGPAAPGELGWLSMASREDLMKMVRPPYSYSALIAMAIQSAPERKLTLSHIYQFVADSFPFYQRSKAGWQNSIRHNLSLNDCFKKVPRDEDDPGKGNYWTLDPNCEKMFDNGNFRRKRKRRSEASSASTSTVAAGTTKSEEGLSSGLGSGVGGKPEGDSPSALLRPPQSPEPPEGTKSTASSPGGSLLSSAPCLNTFFSSLSTLSVSSSGGAQRAGPGSRHLGIQGTPLSSSGAFPASCISSEAPPDTLQLSNGASSGSGQRSSYYSPFPASTSGGQSSPFGSPFYNFSMVNSLIYPREGSEV.

At serine 132 the chain carries Phosphoserine. The segment at residues 158–252 (RPPYSYSALI…DNGNFRRKRK (95 aa)) is a DNA-binding region (fork-head). Residues 248 to 254 (RRKRKRR) carry the Nuclear localization signal motif. Disordered stretches follow at residues 249-319 (RKRK…PGGS) and 340-410 (SSSG…SGGQ). Residues 257–277 (ASSASTSTVAAGTTKSEEGLS) show a composition bias toward low complexity. A compositionally biased stretch (gly residues) spans 278 to 287 (SGLGSGVGGK). Residues serine 292 and serine 302 each carry the phosphoserine modification. Positions 385 to 410 (SNGASSGSGQRSSYYSPFPASTSGGQ) are enriched in low complexity. The 9aaTAD signature appears at 422–430 (SMVNSLIYP).

Phosphorylation promotes the transcription factor activity. Dephosphorylation by protein phosphatase 2A (PP2A) reduces its activity.

Its subcellular location is the nucleus. Its function is as follows. Transcription factor required for pharyngeal arch development, and which is involved in hair, ear, jaw and dental development. May act as a pioneer transcription factor during pharyngeal arch development. Required for the development of the epithelium of hair and whisker placodes and that of teeth. Required for hair follicle stem cell specification. Acts downstream of TBX1 for the formation of the thymus and parathyroid glands from the third pharyngeal pouch. The protein is Forkhead box protein I3 of Canis lupus familiaris (Dog).